The sequence spans 406 residues: Tryptophan 2,3-dioxygenase (406 aa).

Phosphoserine is present on Ser-19. Residues 72–76 and Arg-144 each bind substrate; that span reads FIITH. Residue His-328 participates in heme binding. Position 342 (Thr-342) interacts with substrate.

It belongs to the tryptophan 2,3-dioxygenase family. As to quaternary structure, homotetramer. Dimer of dimers. It depends on heme as a cofactor.

The catalysed reaction is L-tryptophan + O2 = N-formyl-L-kynurenine. The protein operates within amino-acid degradation; L-tryptophan degradation via kynurenine pathway; L-kynurenine from L-tryptophan: step 1/2. Functionally, heme-dependent dioxygenase that catalyzes the oxidative cleavage of the L-tryptophan (L-Trp) pyrrole ring and converts L-tryptophan to N-formyl-L-kynurenine. Catalyzes the oxidative cleavage of the indole moiety. This chain is Tryptophan 2,3-dioxygenase, found in Bos taurus (Bovine).